A 347-amino-acid chain; its full sequence is Peroxidase C2 (347 aa).

The signal sequence occupies residues Met1–Ala24. 4 cysteine pairs are disulfide-bonded: Cys35/Cys115, Cys68/Cys73, Cys121/Cys325, and Cys201/Cys233. His66 serves as the catalytic Proton acceptor. Positions 67, 70, 72, 74, and 76 each coordinate Ca(2+). A glycan (N-linked (GlcNAc...) asparagine) is linked at Asn81. Pro163 is a substrate binding site. Heme b is bound at residue His194. Thr195 contacts Ca(2+). Residues Asn210 and Asn238 are each glycosylated (N-linked (GlcNAc...) asparagine). The Ca(2+) site is built by Asp246, Thr249, and Asp254.

Belongs to the peroxidase family. Classical plant (class III) peroxidase subfamily. Requires Ca(2+) as cofactor. It depends on heme b as a cofactor.

The protein localises to the secreted. It is found in the vacuole. The catalysed reaction is 2 a phenolic donor + H2O2 = 2 a phenolic radical donor + 2 H2O. Removal of H(2)O(2), oxidation of toxic reductants, biosynthesis and degradation of lignin, suberization, auxin catabolism, response to environmental stresses such as wounding, pathogen attack and oxidative stress. These functions might be dependent on each isozyme/isoform in each plant tissue. This is Peroxidase C2 (PRXC2) from Armoracia rusticana (Horseradish).